A 68-amino-acid polypeptide reads, in one-letter code: MAKNKDVRVTVILECTSCAQNDVHGNKVATGISRYITQKNRHNTPNRLEFQKFCPRCYKHTLHGEIKN.

Belongs to the bacterial ribosomal protein bL33 family.

It is found in the plastid. The chain is Large ribosomal subunit protein bL33c from Cuscuta exaltata (Tall dodder).